The following is a 252-amino-acid chain: Sugar fermentation stimulation protein homolog (252 aa).

The protein belongs to the SfsA family.

The polypeptide is Sugar fermentation stimulation protein homolog (Picosynechococcus sp. (strain ATCC 27264 / PCC 7002 / PR-6) (Agmenellum quadruplicatum)).